The sequence spans 562 residues: Probable sesquiterpene synthase (562 aa).

Mg(2+)-binding residues include D315, D319, and E467. The DDXXD motif motif lies at 315–319 (DDIYD).

It belongs to the terpene synthase family. Tpsa subfamily. The cofactor is Mg(2+). Mn(2+) serves as cofactor.

Its function is as follows. Sesquiterpene synthase. The chain is Probable sesquiterpene synthase (STPS) from Santalum murrayanum (Bitter quandong).